Here is a 225-residue protein sequence, read N- to C-terminus: Potassium-transporting ATPase KdpC subunit (225 aa).

The helical transmembrane segment at 18 to 38 (ALLVLTVVTGIVYPLVVTGVA) threads the bilayer. A disordered region spans residues 134–161 (NSVPGHPVRPEDVPADAVTSSGSGLDPD).

This sequence belongs to the KdpC family. As to quaternary structure, the system is composed of three essential subunits: KdpA, KdpB and KdpC.

Its subcellular location is the cell membrane. Its function is as follows. Part of the high-affinity ATP-driven potassium transport (or Kdp) system, which catalyzes the hydrolysis of ATP coupled with the electrogenic transport of potassium into the cytoplasm. This subunit acts as a catalytic chaperone that increases the ATP-binding affinity of the ATP-hydrolyzing subunit KdpB by the formation of a transient KdpB/KdpC/ATP ternary complex. The protein is Potassium-transporting ATPase KdpC subunit of Streptomyces coelicolor (strain ATCC BAA-471 / A3(2) / M145).